The chain runs to 251 residues: ATP synthase subunit a (251 aa).

Helical transmembrane passes span 28–48 (FTQSNEIMVLGTAIVLGIIAL), 63–80 (LVEISYNFIMGLCIEQIG), 86–106 (FFPFIFTLFFFVLMGNLLGLF), 115–135 (HVAVTGGLAVLVIVLVTAVAL), 154–176 (ALAPIIVPIEIISYLSRPVSLSI), 195–215 (FMFLLIGALGTFGYFAALLPM), and 219–239 (VTLVGFELLVAFLQAYVFAIL).

Belongs to the ATPase A chain family. In terms of assembly, F-type ATPases have 2 components, CF(1) - the catalytic core - and CF(0) - the membrane proton channel. CF(1) has five subunits: alpha(3), beta(3), gamma(1), delta(1), epsilon(1). CF(0) has three main subunits: a(1), b(2) and c(9-12). The alpha and beta chains form an alternating ring which encloses part of the gamma chain. CF(1) is attached to CF(0) by a central stalk formed by the gamma and epsilon chains, while a peripheral stalk is formed by the delta and b chains.

The protein resides in the cell inner membrane. In terms of biological role, key component of the proton channel; it plays a direct role in the translocation of protons across the membrane. The chain is ATP synthase subunit a from Granulibacter bethesdensis (strain ATCC BAA-1260 / CGDNIH1).